The chain runs to 759 residues: NADP-dependent malic enzyme (759 aa).

The tract at residues 1 to 428 is malic enzyme; it reads MDEQLKQSAL…KLTEFVYKTN (428 aa). Tyr39 functions as the Proton donor in the catalytic mechanism. Lys94 serves as the catalytic Proton acceptor. A divalent metal cation-binding residues include Glu136, Asp137, and Asp162. NADP(+) contacts are provided by residues 195-198, Asn288, and Asn320; that span reads AGAA. A phosphate acetyltransferase region spans residues 429-759; the sequence is LFMKPIFSQA…AVVEAQTTPL (331 aa).

The protein in the N-terminal section; belongs to the malic enzymes family. It in the C-terminal section; belongs to the phosphate acetyltransferase and butyryltransferase family. Mg(2+) is required as a cofactor. Mn(2+) serves as cofactor.

The enzyme catalyses (S)-malate + NADP(+) = pyruvate + CO2 + NADPH. The catalysed reaction is oxaloacetate + H(+) = pyruvate + CO2. The protein is NADP-dependent malic enzyme (maeB) of Salmonella typhimurium (strain LT2 / SGSC1412 / ATCC 700720).